The following is a 228-amino-acid chain: tRNA (guanine-N(1)-)-methyltransferase (228 aa).

S-adenosyl-L-methionine-binding positions include Gly111 and 135–140 (LGDYVL).

Belongs to the RNA methyltransferase TrmD family. As to quaternary structure, homodimer.

It is found in the cytoplasm. The catalysed reaction is guanosine(37) in tRNA + S-adenosyl-L-methionine = N(1)-methylguanosine(37) in tRNA + S-adenosyl-L-homocysteine + H(+). In terms of biological role, specifically methylates guanosine-37 in various tRNAs. This chain is tRNA (guanine-N(1)-)-methyltransferase, found in Clavibacter sepedonicus (Clavibacter michiganensis subsp. sepedonicus).